The following is a 241-amino-acid chain: Octanoyltransferase (241 aa).

The BPL/LPL catalytic domain occupies 43 to 228 (AETPDEIWLV…CLTANLDGSP (186 aa)). Substrate-binding positions include 83–90 (RGGQITYH), 159–161 (ALG), and 172–174 (GVS). C190 (acyl-thioester intermediate) is an active-site residue.

The protein belongs to the LipB family.

It localises to the cytoplasm. It catalyses the reaction octanoyl-[ACP] + L-lysyl-[protein] = N(6)-octanoyl-L-lysyl-[protein] + holo-[ACP] + H(+). Its pathway is protein modification; protein lipoylation via endogenous pathway; protein N(6)-(lipoyl)lysine from octanoyl-[acyl-carrier-protein]: step 1/2. Functionally, catalyzes the transfer of endogenously produced octanoic acid from octanoyl-acyl-carrier-protein onto the lipoyl domains of lipoate-dependent enzymes. Lipoyl-ACP can also act as a substrate although octanoyl-ACP is likely to be the physiological substrate. The chain is Octanoyltransferase from Paraburkholderia xenovorans (strain LB400).